The primary structure comprises 346 residues: Archaeosine synthase subunit beta (346 aa).

Residues 36–276 enclose the Radical SAM core domain; sequence GVQTKTLTVI…LRQAKAAHPE (241 aa). [4Fe-4S] cluster contacts are provided by cysteine 51, cysteine 59, and cysteine 62.

Belongs to the radical SAM superfamily. RaSEA family. As to quaternary structure, forms a robust complex with the archaeosine synthase alpha subunit ArcS. This complex likely consists of an alpha(2)beta(2) heterotetrameric structure. [4Fe-4S] cluster serves as cofactor.

It carries out the reaction 7-N-[(5S)-5-amino-5-carboxypentyl]formamidino-7-deazaguanosine(15) in tRNA + S-adenosyl-L-methionine = archaeosine(15) in tRNA + L-1-piperideine-6-carboxylate + 5'-deoxyadenosine + L-methionine + 2 H(+). It functions in the pathway tRNA modification; archaeosine-tRNA biosynthesis. Its function is as follows. Radical SAM enzyme involved in the synthesis of archaeosine, a modified nucleoside present in the dihydrouridine loop (D-loop) of archaeal tRNAs. Catalyzes the cleavage of the C(epsilon)-N bond of the lysine moiety of q0kN15-tRNA, leading to the formation of archaeosine at position 15 in tRNAs. This chain is Archaeosine synthase subunit beta, found in Methanosarcina acetivorans (strain ATCC 35395 / DSM 2834 / JCM 12185 / C2A).